The primary structure comprises 240 residues: Eukaryotic translation initiation factor 3 subunit J (240 aa).

A disordered region spans residues 19-95; sequence KADVNKWAGE…FANMTPEQQL (77 aa). Acidic residues predominate over residues 28–45; sequence EDEDDVKDNWEDDDEEEE. Basic and acidic residues predominate over residues 46–56; that stretch reads KKDAPKQEDTP. Residues 60–71 show a composition bias toward basic residues; that stretch reads AKPKKAAQQKKL. Coiled-coil stretches lie at residues 63-90 and 176-235; these read KKAAQQKKLKKEDLERLQREEEEFANMT and SNNI…DYDD. Over residues 72–81 the composition is skewed to basic and acidic residues; sequence KKEDLERLQR.

The protein belongs to the eIF-3 subunit J family. In terms of assembly, component of the eukaryotic translation initiation factor 3 (eIF-3) complex.

It is found in the cytoplasm. In terms of biological role, component of the eukaryotic translation initiation factor 3 (eIF-3) complex, which is involved in protein synthesis of a specialized repertoire of mRNAs and, together with other initiation factors, stimulates binding of mRNA and methionyl-tRNAi to the 40S ribosome. The eIF-3 complex specifically targets and initiates translation of a subset of mRNAs involved in cell proliferation. The sequence is that of Eukaryotic translation initiation factor 3 subunit J from Anopheles gambiae (African malaria mosquito).